The chain runs to 230 residues: Sugar fermentation stimulation protein homolog (230 aa).

Belongs to the SfsA family.

The chain is Sugar fermentation stimulation protein homolog from Clostridium kluyveri (strain NBRC 12016).